Consider the following 372-residue polypeptide: Cytochrome b (372 aa).

Helical transmembrane passes span 25-45 (FGSM…FLAI), 69-90 (WMMQ…YIHI), 105-125 (WLSG…GYVL), and 170-190 (FFAL…IHIM). Histidine 75 and histidine 89 together coordinate heme b. Histidine 174 and histidine 188 together coordinate heme b. Histidine 193 provides a ligand contact to a ubiquinone. Helical transmembrane passes span 218–238 (HKDM…MSFN), 280–300 (LGGA…PFTH), 312–332 (LMQF…WAAT), and 339–358 (FTTI…IMNP).

The protein belongs to the cytochrome b family. As to quaternary structure, the cytochrome bc1 complex contains 3 respiratory subunits (MT-CYB, CYC1 and UQCRFS1), 2 core proteins (UQCRC1 and UQCRC2) and probably 6 low-molecular weight proteins. The cofactor is heme b.

Its subcellular location is the mitochondrion inner membrane. In terms of biological role, component of the ubiquinol-cytochrome c reductase complex (complex III or cytochrome b-c1 complex) that is part of the mitochondrial respiratory chain. The b-c1 complex mediates electron transfer from ubiquinol to cytochrome c. Contributes to the generation of a proton gradient across the mitochondrial membrane that is then used for ATP synthesis. The sequence is that of Cytochrome b (MT-CYB) from Pantherophis bairdi (Baird's ratsnake).